The chain runs to 697 residues: Polyribonucleotide nucleotidyltransferase (697 aa).

Residues D488 and D494 each contribute to the Mg(2+) site. The KH domain occupies 555-614 (PTLLTLKINPDKIRDVIGKGGATIRALTEETGCTIDIEDDGSVKIYGETREKADEAVRRV). In terms of domain architecture, S1 motif spans 624–692 (GAIYEGKVTR…QRGRIKLSMK (69 aa)).

Belongs to the polyribonucleotide nucleotidyltransferase family. Component of the RNA degradosome, which is a multiprotein complex involved in RNA processing and mRNA degradation. The cofactor is Mg(2+).

It is found in the cytoplasm. It carries out the reaction RNA(n+1) + phosphate = RNA(n) + a ribonucleoside 5'-diphosphate. Functionally, involved in mRNA degradation. Catalyzes the phosphorolysis of single-stranded polyribonucleotides processively in the 3'- to 5'-direction. In Alcanivorax borkumensis (strain ATCC 700651 / DSM 11573 / NCIMB 13689 / SK2), this protein is Polyribonucleotide nucleotidyltransferase.